Consider the following 462-residue polypeptide: tRNA modification GTPase MnmE (462 aa).

Residues Arg-34, Glu-92, and Lys-131 each contribute to the (6S)-5-formyl-5,6,7,8-tetrahydrofolate site. Residues 227-386 (GLQVVIAGKP…LIDAITAHAG (160 aa)) form the TrmE-type G domain. K(+) is bound at residue Asn-237. Residues 237–242 (NAGKSS), 256–262 (TDIAGTT), and 281–284 (DTAG) each bind GTP. Position 241 (Ser-241) interacts with Mg(2+). Residues Thr-256, Ile-258, and Thr-261 each contribute to the K(+) site. Position 262 (Thr-262) interacts with Mg(2+). Position 462 (Lys-462) interacts with (6S)-5-formyl-5,6,7,8-tetrahydrofolate.

Belongs to the TRAFAC class TrmE-Era-EngA-EngB-Septin-like GTPase superfamily. TrmE GTPase family. In terms of assembly, homodimer. Heterotetramer of two MnmE and two MnmG subunits. Requires K(+) as cofactor.

It localises to the cytoplasm. Exhibits a very high intrinsic GTPase hydrolysis rate. Involved in the addition of a carboxymethylaminomethyl (cmnm) group at the wobble position (U34) of certain tRNAs, forming tRNA-cmnm(5)s(2)U34. The chain is tRNA modification GTPase MnmE from Acinetobacter baylyi (strain ATCC 33305 / BD413 / ADP1).